The chain runs to 271 residues: Formamidopyrimidine-DNA glycosylase (271 aa).

Proline 2 (schiff-base intermediate with DNA) is an active-site residue. The active-site Proton donor is glutamate 3. The Proton donor; for beta-elimination activity role is filled by lysine 57. DNA is bound by residues histidine 90, arginine 109, and lysine 151. The segment at 236–270 (HVYGRGGETCTQCGNLLSEIRLGQRTTVFCGICQT) adopts an FPG-type zinc-finger fold. Catalysis depends on arginine 260, which acts as the Proton donor; for delta-elimination activity.

This sequence belongs to the FPG family. Monomer. It depends on Zn(2+) as a cofactor.

It carries out the reaction Hydrolysis of DNA containing ring-opened 7-methylguanine residues, releasing 2,6-diamino-4-hydroxy-5-(N-methyl)formamidopyrimidine.. The catalysed reaction is 2'-deoxyribonucleotide-(2'-deoxyribose 5'-phosphate)-2'-deoxyribonucleotide-DNA = a 3'-end 2'-deoxyribonucleotide-(2,3-dehydro-2,3-deoxyribose 5'-phosphate)-DNA + a 5'-end 5'-phospho-2'-deoxyribonucleoside-DNA + H(+). Functionally, involved in base excision repair of DNA damaged by oxidation or by mutagenic agents. Acts as a DNA glycosylase that recognizes and removes damaged bases. Has a preference for oxidized purines, such as 7,8-dihydro-8-oxoguanine (8-oxoG). Has AP (apurinic/apyrimidinic) lyase activity and introduces nicks in the DNA strand. Cleaves the DNA backbone by beta-delta elimination to generate a single-strand break at the site of the removed base with both 3'- and 5'-phosphates. The sequence is that of Formamidopyrimidine-DNA glycosylase from Shewanella sp. (strain MR-4).